A 360-amino-acid polypeptide reads, in one-letter code: Phenylalanine--tRNA ligase alpha subunit (360 aa).

Residue glutamate 260 coordinates Mg(2+).

The protein belongs to the class-II aminoacyl-tRNA synthetase family. Phe-tRNA synthetase alpha subunit type 1 subfamily. Tetramer of two alpha and two beta subunits. It depends on Mg(2+) as a cofactor.

Its subcellular location is the cytoplasm. The enzyme catalyses tRNA(Phe) + L-phenylalanine + ATP = L-phenylalanyl-tRNA(Phe) + AMP + diphosphate + H(+). The sequence is that of Phenylalanine--tRNA ligase alpha subunit from Bradyrhizobium diazoefficiens (strain JCM 10833 / BCRC 13528 / IAM 13628 / NBRC 14792 / USDA 110).